Consider the following 200-residue polypeptide: Phospholipase D (200 aa).

A signal peptide spans 1–25; that stretch reads MKRKNNKFIEISIAFILGIALGLYG. Positions 142-169 constitute a PLD phosphodiesterase domain; that stretch reads VPGIAHNKVIIIDKKKVITGSFNFTAAA. Catalysis depends on residues His147, Lys149, and Asp154.

It belongs to the phospholipase D family. As to quaternary structure, homodimer.

It localises to the secreted. It carries out the reaction a 1,2-diacyl-sn-glycero-3-phosphocholine + H2O = a 1,2-diacyl-sn-glycero-3-phosphate + choline + H(+). Functionally, could be a virulence factor. The polypeptide is Phospholipase D (pld) (Rickettsia conorii (strain ATCC VR-613 / Malish 7)).